A 313-amino-acid polypeptide reads, in one-letter code: Protein YABBY 3 (313 aa).

The segment at 65–92 adopts a C4-type zinc-finger fold; sequence CHYCDTVLVVSVPSSSLFETVTVRCGHC. Disordered regions lie at residues 107–149 and 180–221; these read TTAA…SLLD and NNSP…KRQR. Positions 112–128 are enriched in pro residues; that stretch reads APPPPPPPPPPPPPPAA.

It belongs to the YABBY family. Expressed in shoot apex and young inflorescences.

The protein resides in the nucleus. In Oryza sativa subsp. japonica (Rice), this protein is Protein YABBY 3 (YAB3).